The chain runs to 361 residues: MPPPKKFRVQSKNYFLTYPQCSLSKEEALSQLQNLNTPVNKKFIKICRELHENGEPHLHVLVQFEGKYQCTNNRFFDLVSPTRSAHFHPNIQGAKSSSDVKSYIDKDGDTIEWGDFQIDGRSARGGQQSANDSYAKALNAGSVQSALAVLREEQPKDFVLQNHNIRSNLERIFAKAPEPWVPPFQVSSFTNVPDEMQEWADNYFGTGDAAPPDRPVSIIVEGDSRTGKTMWARALGPHNYLSGHLDFNGRVFSNDVQYNVIDDIAPHYLKLKHWKELLGAQKDWQSNCKYGKPVQIKGGIPAIVLCNPGEGASYKEFLDKAENTGLKNWTIKNAIFITLTAPLYQESTQASQETGNQKAQG.

Positions 8-116 constitute a CRESS-DNA virus Rep endonuclease domain; the sequence is RVQSKNYFLT…DGDTIEWGDF (109 aa). The short motif at 15–18 is the RCR-1 element; that stretch reads FLTY. A divalent metal cation is bound by residues E49, H57, and H59. The RCR-2 motif lies at 57-59; sequence HLH. Catalysis depends on Y103, which acts as the For DNA cleavage activity. The RCR-3 signature appears at 103–106; it reads YIDK. Position 107 (D107) interacts with a divalent metal cation. The segment at 143-153 is binding to RBR1; the sequence is VQSALAVLREE. The interval 156–176 is oligomerization; that stretch reads KDFVLQNHNIRSNLERIFAKA. 222–229 serves as a coordination point for ATP; that stretch reads GDSRTGKT.

It belongs to the geminiviridae Rep protein family. In terms of assembly, homooligomer. Interacts with the replication enhancer. protein (REn). Interacts with host retinoblastoma-related protein 1 (RBR1), and may thereby induce the transcription of host replicative enzymes even if the cell is not dividing anymore. Interacts with host PCNA. Interacts with host SCE1 protein. Mg(2+) is required as a cofactor. Mn(2+) serves as cofactor.

Its subcellular location is the host nucleus. Functionally, essential for the replication of viral ssDNA. The closed circular ssDNA genome is first converted to a superhelical dsDNA. Rep binds a specific region at the genome origin of replication. It introduces an endonucleolytic nick within the conserved sequence 5'-TAATATTAC-3' in the intergenic region of the genome present in all geminiviruses, thereby initiating the rolling circle replication (RCR). Following cleavage, binds covalently to the 5'-phosphate of DNA as a tyrosyl ester. The cleavage gives rise to a free 3'-OH that serves as a primer for the cellular DNA polymerase. The polymerase synthesizes the (+) strand DNA by rolling circle mechanism. After one round of replication, a Rep-catalyzed nucleotidyl transfer reaction releases a circular single-stranded virus genome, thereby terminating the replication. Displays origin-specific DNA cleavage, nucleotidyl transferase, ATPase and helicase activities. The protein is Replication-associated protein of Nicotiana tabacum (Common tobacco).